The primary structure comprises 493 residues: 1-aminocyclopropane-1-carboxylate synthase 1 (493 aa).

Position 279 is an N6-(pyridoxal phosphate)lysine (lysine 279).

It belongs to the class-I pyridoxal-phosphate-dependent aminotransferase family. As to quaternary structure, homodimer. Requires pyridoxal 5'-phosphate as cofactor.

The enzyme catalyses S-adenosyl-L-methionine = 1-aminocyclopropane-1-carboxylate + S-methyl-5'-thioadenosine + H(+). It functions in the pathway alkene biosynthesis; ethylene biosynthesis via S-adenosyl-L-methionine; ethylene from S-adenosyl-L-methionine: step 1/2. Catalyzes the formation of 1-aminocyclopropane-1-carboxylate, a direct precursor of ethylene in higher plants. The sequence is that of 1-aminocyclopropane-1-carboxylate synthase 1 (ACC1A) from Cucurbita pepo (Vegetable marrow).